The sequence spans 215 residues: Small ribosomal subunit protein uS3c (215 aa).

The 74-residue stretch at 43-116 folds into the KH type-2 domain; sequence IKNYIKKNMK…KLNMAITRIA (74 aa).

The protein belongs to the universal ribosomal protein uS3 family. Part of the 30S ribosomal subunit.

The protein resides in the plastid. Its subcellular location is the chloroplast. The polypeptide is Small ribosomal subunit protein uS3c (rps3) (Morus indica (Mulberry)).